A 128-amino-acid polypeptide reads, in one-letter code: Con-Ins F2b (128 aa).

The N-terminal stretch at 1 to 24 is a signal peptide; that stretch reads MTTSSYFLLVALGLLLYVCRSSFG. Disulfide bonds link C29–C104, C41–C107, C53–C120, and C106–C111. Residues 59 to 89 constitute a propeptide, c peptide; it reads LQGGTGKKRGRASLLRKRRAFLSMLKARAKR. E115 is modified (4-carboxyglutamate; partial). At S127 the chain carries Serine amide.

The protein belongs to the insulin family. As to quaternary structure, heterodimer of A and B chains; disulfide-linked. As to expression, expressed by the venom gland.

Its subcellular location is the secreted. This venom insulin facilitates prey capture by rapidly inducing hypoglycemic shock. Intraperitoneal injection of this peptide into zebrafish lowers blood glucose with the same potency than human insulin. In vivo, when applied to water, this peptide reduces overall locomotor activity of zebrafish larvae, observed as a significant decrease in the percentage of time spent swimming and movement frequency. The sequence is that of Con-Ins F2b from Conus floridulus (Cone snail).